The chain runs to 730 residues: Elongation factor 2 (730 aa).

Positions valine 19–isoleucine 260 constitute a tr-type G domain. GTP-binding positions include alanine 28–threonine 35, aspartate 94–histidine 98, and asparagine 148–aspartate 151. Histidine 596 bears the Diphthamide mark.

Belongs to the TRAFAC class translation factor GTPase superfamily. Classic translation factor GTPase family. EF-G/EF-2 subfamily.

Its subcellular location is the cytoplasm. Catalyzes the GTP-dependent ribosomal translocation step during translation elongation. During this step, the ribosome changes from the pre-translocational (PRE) to the post-translocational (POST) state as the newly formed A-site-bound peptidyl-tRNA and P-site-bound deacylated tRNA move to the P and E sites, respectively. Catalyzes the coordinated movement of the two tRNA molecules, the mRNA and conformational changes in the ribosome. This Methanococcoides methylutens protein is Elongation factor 2 (fusA).